A 236-amino-acid polypeptide reads, in one-letter code: Orotidine 5'-phosphate decarboxylase (236 aa).

Substrate is bound by residues Asp-16, Lys-38, 65–74 (DLKLHDIGNT), Thr-123, Arg-184, Gln-193, Gly-213, and Arg-214. Residue Lys-67 is the Proton donor of the active site.

The protein belongs to the OMP decarboxylase family. Type 1 subfamily. As to quaternary structure, homodimer.

It catalyses the reaction orotidine 5'-phosphate + H(+) = UMP + CO2. Its pathway is pyrimidine metabolism; UMP biosynthesis via de novo pathway; UMP from orotate: step 2/2. Its function is as follows. Catalyzes the decarboxylation of orotidine 5'-monophosphate (OMP) to uridine 5'-monophosphate (UMP). The chain is Orotidine 5'-phosphate decarboxylase from Methylobacterium sp. (strain 4-46).